The sequence spans 29 residues: Thrombin-like enzyme collinein-2 (29 aa).

As to quaternary structure, monomer. Expressed by the venom gland.

The protein resides in the secreted. In terms of biological role, thrombin-like snake venom serine protease. The polypeptide is Thrombin-like enzyme collinein-2 (Crotalus durissus collilineatus (Brazilian rattlesnake)).